A 365-amino-acid chain; its full sequence is Peptide chain release factor 2 (365 aa).

Position 252 is an N5-methylglutamine (Gln252).

The protein belongs to the prokaryotic/mitochondrial release factor family. Post-translationally, methylated by PrmC. Methylation increases the termination efficiency of RF2.

Its subcellular location is the cytoplasm. Peptide chain release factor 2 directs the termination of translation in response to the peptide chain termination codons UGA and UAA. The sequence is that of Peptide chain release factor 2 from Shewanella baltica (strain OS223).